The sequence spans 785 residues: MASKVTDAIVWYQKKEFLSVATTAPGPQQVLPGYCQCSLKDQGLFIQCLIGAYDQQIWEKSVEQREIKFIKLGLRNKPKKTAHVKPDLIDVDLVRGSAFAKAKPESPWTSLTRKGIVRVVFFPFFFRWWLQVTSKVIFFWLLVLYLLQVAAIVLFCSTSSPHSIPLTEVIGPIWLMLLLGTVHCQIVSTRTPKPPLSTGGKRRRKLRKAAHLEVHREGDGSSTTDNTQEGAVQNHGTSTSHSVGTVFRDLWHAAFFLSGSKKAKNSIDKSTETDNGYVSLDGKKTVKSGEDGIQNHEPQCETIRPEETAWNTGTLRNGPSKDTQRTITNVSDEVSSEEGPETGYSLRRHVDRTSEGVLRNRKSHHYKKHYPNEDAPKSGTSCSSRCSSSRQDSESARPESETEDVLWEDLLHCAECHSSCTSETDVENHQINPCVKKEYRDDPFHQSHLPWLHSSHPGLEKISAIVWEGNDCKKADMSVLEISGMIMNRVNSHIPGIGYQIFGNAVSLILGLTPFVFRLSQATDLEQLTAHSASELYVIAFGSNEDVIVLSMVIISFVVRVSLVWIFFFLLCVAERTYKQRLLFAKLFGHLTSARRARKSEVPHFRLKKVQNIKMWLSLRSYLKRRGPQRSVDVIVSSAFLLTISVVFICCAQLLHVHEIFLDCHYNWELVIWCISLTLFLLRFVTLGSETSKKYSNTSILLTEQINLYLKMEKKPNKKEELTLVNNVLKLATKLLKELDSPFRLYGLTMNPLLYNITQVVILSAVSGVISDLLGFNLKLWKIKS.

The 146-residue stretch at 46–191 (IQCLIGAYDQ…VHCQIVSTRT (146 aa)) folds into the PHTF domain. The next 2 helical transmembrane spans lie at 136–156 (VIFF…VLFC) and 164–184 (IPLT…TVHC). Disordered stretches follow at residues 190–239 (RTPK…GTST) and 304–401 (RPEE…PESE). Basic residues predominate over residues 200 to 209 (GKRRRKLRKA). The span at 210 to 219 (AHLEVHREGD) shows a compositional bias: basic and acidic residues. Composition is skewed to polar residues over residues 220–239 (GSST…GTST) and 309–333 (AWNT…VSDE). An N-linked (GlcNAc...) asparagine glycan is attached at N329. Positions 359–369 (RNRKSHHYKKH) are enriched in basic residues. Positions 378–390 (SGTSCSSRCSSSR) are enriched in low complexity. The segment covering 391 to 400 (QDSESARPES) has biased composition (basic and acidic residues). 4 helical membrane passes run 497-517 (IGYQ…PFVF), 553-573 (VIIS…LLCV), 634-654 (VIVS…CAQL), and 668-688 (WELV…VTLG). Residues N697 and N756 are each glycosylated (N-linked (GlcNAc...) asparagine). A helical transmembrane segment spans residues 760–780 (VVILSAVSGVISDLLGFNLKL).

Its subcellular location is the membrane. In Homo sapiens (Human), this protein is Protein PHTF2 (PHTF2).